The following is a 619-amino-acid chain: Type VI secretion system component TssF1 (619 aa).

As to quaternary structure, interacts with TssA1.

Its function is as follows. Core component of the H1 type VI (H1-T6SS) secretion system that plays a role in the release of toxins targeting both eukaryotic and prokaryotic species. This Pseudomonas aeruginosa (strain ATCC 15692 / DSM 22644 / CIP 104116 / JCM 14847 / LMG 12228 / 1C / PRS 101 / PAO1) protein is Type VI secretion system component TssF1.